The sequence spans 672 residues: Outer dynein arm-docking complex subunit 4 (672 aa).

TPR repeat units lie at residues 13 to 46 (FPSY…QDGD), 48 to 80 (NCLV…DPAF), 81 to 114 (CKGI…RPDR), 275 to 311 (LKSL…NKEE), 320 to 353 (GNLY…AKEY), 360 to 393 (SRAL…AKTT), 397 to 430 (TWLF…AEEE), and 437 to 470 (LNAS…AKLV). The span at 527 to 544 (RVRDEPEKVVKQWDHSED) shows a compositional bias: basic and acidic residues. Residues 527-672 (RVRDEPEKVV…TGNEMEKEYE (146 aa)) are disordered. Positions 545 to 555 (EKETDEDDEAF) are enriched in acidic residues. Composition is skewed to basic and acidic residues over residues 595–650 (ETGR…EELG) and 658–672 (GETK…KEYE).

Component of the outer dynein arm-docking complex along with ODAD1, ODAD2 and ODAD3. Interacts with ODAD1; this interaction may facilitate the recruitment and/or attachment of outer dynein arm docking complex proteins, including ODAD1, ODAD3 and ODAD2, to ciliary axonemes. Interacts with components of the IFT complex A, including IFT140, TTC21B/IFT139 and WDR19/IFT144, and the IFT complex B, including IFT46, IFT52 and IFT57. Interacts with CFAP53. Expressed in the nasal mucosa (at protein level).

It is found in the cytoplasm. Its subcellular location is the cytoskeleton. The protein resides in the cilium axoneme. In terms of biological role, component of the outer dynein arm-docking complex (ODA-DC) that mediates outer dynein arms (ODA) binding onto the doublet microtubule. Plays an essential role for the assembly of ODA-DC and for the docking of ODA in ciliary axoneme. In Homo sapiens (Human), this protein is Outer dynein arm-docking complex subunit 4.